Reading from the N-terminus, the 253-residue chain is 5-oxoprolinase subunit A (253 aa).

Belongs to the LamB/PxpA family. Forms a complex composed of PxpA, PxpB and PxpC.

It carries out the reaction 5-oxo-L-proline + ATP + 2 H2O = L-glutamate + ADP + phosphate + H(+). In terms of biological role, catalyzes the cleavage of 5-oxoproline to form L-glutamate coupled to the hydrolysis of ATP to ADP and inorganic phosphate. The polypeptide is 5-oxoprolinase subunit A (Bacillus cereus (strain ZK / E33L)).